A 318-amino-acid polypeptide reads, in one-letter code: Probable casein kinase I homolog ECU11_1980 (318 aa).

In terms of domain architecture, Protein kinase spans tyrosine 8–phenylalanine 276. ATP is bound by residues isoleucine 14–valine 22 and lysine 37. Residue aspartate 129 is the Proton acceptor of the active site.

Belongs to the protein kinase superfamily. CK1 Ser/Thr protein kinase family. Casein kinase I subfamily.

The protein localises to the nucleus. The catalysed reaction is L-seryl-[protein] + ATP = O-phospho-L-seryl-[protein] + ADP + H(+). The enzyme catalyses L-threonyl-[protein] + ATP = O-phospho-L-threonyl-[protein] + ADP + H(+). Functionally, involved in DNA repair. May regulate the activity of protein(s) involved in double strand break repair caused by gamma rays. In Encephalitozoon cuniculi (strain GB-M1) (Microsporidian parasite), this protein is Probable casein kinase I homolog ECU11_1980.